A 338-amino-acid chain; its full sequence is D-erythrose-4-phosphate dehydrogenase (338 aa).

Residue 11–12 (RI) coordinates NAD(+). Substrate-binding positions include 153-155 (SCT), arginine 199, 212-213 (TK), and arginine 235. Cysteine 154 acts as the Nucleophile in catalysis. Residue asparagine 317 participates in NAD(+) binding.

The protein belongs to the glyceraldehyde-3-phosphate dehydrogenase family. Epd subfamily. Homotetramer.

Its subcellular location is the cytoplasm. It carries out the reaction D-erythrose 4-phosphate + NAD(+) + H2O = 4-phospho-D-erythronate + NADH + 2 H(+). It participates in cofactor biosynthesis; pyridoxine 5'-phosphate biosynthesis; pyridoxine 5'-phosphate from D-erythrose 4-phosphate: step 1/5. In terms of biological role, catalyzes the NAD-dependent conversion of D-erythrose 4-phosphate to 4-phosphoerythronate. The sequence is that of D-erythrose-4-phosphate dehydrogenase from Shewanella putrefaciens (strain CN-32 / ATCC BAA-453).